The sequence spans 410 residues: D-3-phosphoglycerate dehydrogenase (410 aa).

Residues 161-162 (HI), Asp181, 238-240 (ASR), and Asp264 contribute to the NAD(+) site. The active site involves Arg240. Glu269 is a catalytic residue. His292 functions as the Proton donor in the catalytic mechanism. 292 to 295 (HIGG) is an NAD(+) binding site. One can recognise an ACT domain in the interval 339–410 (RLMHIHENRP…PGTIRARLLY (72 aa)).

This sequence belongs to the D-isomer specific 2-hydroxyacid dehydrogenase family. As to quaternary structure, homotetramer.

The catalysed reaction is (2R)-3-phosphoglycerate + NAD(+) = 3-phosphooxypyruvate + NADH + H(+). It carries out the reaction (R)-2-hydroxyglutarate + NAD(+) = 2-oxoglutarate + NADH + H(+). It functions in the pathway amino-acid biosynthesis; L-serine biosynthesis; L-serine from 3-phospho-D-glycerate: step 1/3. In bacteria displays feedback inhibition by L-serine. Catalyzes the reversible oxidation of 3-phospho-D-glycerate to 3-phosphonooxypyruvate, the first step of the phosphorylated L-serine biosynthesis pathway. Also catalyzes the reversible oxidation of 2-hydroxyglutarate to 2-oxoglutarate. The sequence is that of D-3-phosphoglycerate dehydrogenase (serA) from Escherichia coli O6:H1 (strain CFT073 / ATCC 700928 / UPEC).